The chain runs to 235 residues: (5-formylfuran-3-yl)methyl phosphate synthase (235 aa).

The Schiff-base intermediate with substrate role is filled by lysine 27. Residue lysine 86 is the Proton acceptor of the active site.

It belongs to the MfnB family.

It catalyses the reaction 2 D-glyceraldehyde 3-phosphate = 4-(hydroxymethyl)-2-furancarboxaldehyde phosphate + phosphate + 2 H2O. It participates in cofactor biosynthesis; methanofuran biosynthesis. Its function is as follows. Catalyzes the formation of 4-(hydroxymethyl)-2-furancarboxaldehyde phosphate (4-HFC-P) from two molecules of glyceraldehyde-3-P (GA-3-P). The chain is (5-formylfuran-3-yl)methyl phosphate synthase from Archaeoglobus fulgidus (strain ATCC 49558 / DSM 4304 / JCM 9628 / NBRC 100126 / VC-16).